The following is a 215-amino-acid chain: Cytokinin riboside 5'-monophosphate phosphoribohydrolase LOG3 (215 aa).

Substrate-binding positions include E84, 102–103 (RK), 119–125 (GYGTLEE), and T131.

The protein belongs to the LOG family. Expressed in roots and shoots. Detected in root procambium, lateral root primordia, vascular tissues of immature leaves, axillary buds, style and ovular funiculus.

The protein resides in the cytoplasm. The protein localises to the nucleus. The catalysed reaction is N(6)-(dimethylallyl)adenosine 5'-phosphate + H2O = N(6)-dimethylallyladenine + D-ribose 5-phosphate. It carries out the reaction 9-ribosyl-trans-zeatin 5'-phosphate + H2O = trans-zeatin + D-ribose 5-phosphate. Cytokinin-activating enzyme working in the direct activation pathway. Phosphoribohydrolase that converts inactive cytokinin nucleotides to the biologically active free-base forms. The sequence is that of Cytokinin riboside 5'-monophosphate phosphoribohydrolase LOG3 (LOG3) from Arabidopsis thaliana (Mouse-ear cress).